The chain runs to 174 residues: MLDREGYRPNVGIILINNRNEVFWGKRVREHSWQFPQGGIKPGESPETAMYRELYEEVGLLPQHVKIIGRTRDWLRYDVPNNWVRREWRGSYRGQKQIWYLLRLTGRDCDVNLRATRHPEFDGWRWHQYWAPVDEVIDFKRDVYLGALKELSSRFLRGMESYEDFAARQSSDNR.

The Nudix hydrolase domain maps to Gly-6–Lys-149. Positions Gly-38–Gly-59 match the Nudix box motif.

It belongs to the Nudix hydrolase family. RppH subfamily. A divalent metal cation is required as a cofactor.

Functionally, accelerates the degradation of transcripts by removing pyrophosphate from the 5'-end of triphosphorylated RNA, leading to a more labile monophosphorylated state that can stimulate subsequent ribonuclease cleavage. The protein is RNA pyrophosphohydrolase of Neisseria meningitidis serogroup B (strain ATCC BAA-335 / MC58).